Reading from the N-terminus, the 205-residue chain is RPW8-like protein 2 (205 aa).

Positions 1–153 constitute an RPW8 domain; that stretch reads MPLTEIIAGA…IMGQPIDCII (153 aa). A helical membrane pass occupies residues 7–23; that stretch reads IAGAALGLALQILHEAI. Coiled coils occupy residues 70–92 and 125–147; these read EDLK…LKRR and ADIK…IMGQ.

This sequence belongs to the plant RPW8 protein family.

The protein localises to the membrane. In terms of biological role, probable disease resistance (R) protein. This Arabidopsis thaliana (Mouse-ear cress) protein is RPW8-like protein 2.